Here is a 439-residue protein sequence, read N- to C-terminus: Glycosyl hydrolase DigH (439 aa).

The first 27 residues, 1–27 (MDICSRNEKLAIRRPAILVALALLLCS), serve as a signal peptide directing secretion. Cys28 is lipidated: N-palmitoyl cysteine. The S-diacylglycerol cysteine moiety is linked to residue Cys28. The tract at residues 34-54 (ESMVTPPAGSKPPATTQQSSQ) is disordered.

This sequence belongs to the glycosyl hydrolase-like 10 (GHL10) family.

It is found in the cell outer membrane. Divisome-localized glycosyl hydrolase that cleaves peptide-free (denuded) peptidoglycans. In Escherichia coli O6:H1 (strain CFT073 / ATCC 700928 / UPEC), this protein is Glycosyl hydrolase DigH.